A 168-amino-acid chain; its full sequence is Pollen allergen Cro s 1 (168 aa).

An N-terminal signal peptide occupies residues methionine 1 to alanine 26. Cystine bridges form between cysteine 38-cysteine 109, cysteine 41-cysteine 153, and cysteine 62-cysteine 97. Asparagine 64 is a glycosylation site (N-linked (GlcNAc...) asparagine).

This sequence belongs to the Ole e I family. In terms of tissue distribution, expressed in pollen.

It localises to the secreted. The sequence is that of Pollen allergen Cro s 1 from Crocus sativus (Saffron).